The following is a 501-amino-acid chain: WD repeat-containing protein wdr-5.3 (501 aa).

Disordered stretches follow at residues 1-35 (MNPERQETISPKNVPFQPVPTPNQQSLQSRMLESN), 58-85 (PIGVPQTARPPSNQSPHPNPPGYPYQSH), and 155-197 (KSAE…ITKK). A compositionally biased stretch (polar residues) spans 22–35 (PNQQSLQSRMLESN). Residues 167-177 (SITTKPTSTIQ) show a composition bias toward polar residues. WD repeat units lie at residues 211 to 241 (GHTKSVSVIKFSYCGKYLGTGSADKQIKVWN), 253 to 283 (SHQLGINDFSWSSNSQFIASASDDTTVKIFD), 295 to 325 (GHTNYVFCCSFNPQSSLIASAGFDETVRVWD), 337 to 367 (AHSDPITSISYNHDGNTMATSSYDGCIRVWD), 381 to 410 (DHAPVTFVCFSPNGKYLLSAQLDSSLKLWD), 422 to 455 (GHKNKKYCLFANMSVPLGKHIISGSEDGRILVWS), and 467 to 499 (GHTTPVLATDSHPTLNIIASGGLEPDNVIRIWR).

It belongs to the WD repeat WDR5/wds family.

Its function is as follows. Not required for methylation of histone H3 'Lys-4'. This Caenorhabditis elegans protein is WD repeat-containing protein wdr-5.3 (wdr-5.3).